We begin with the raw amino-acid sequence, 231 residues long: Cutinase 2 (231 aa).

The first 16 residues, 1 to 16, serve as a signal peptide directing secretion; sequence MKFFALTTLLAATASA. Cys-48 and Cys-126 form a disulfide bridge. Ser-137 functions as the Nucleophile in the catalytic mechanism. Residues Cys-188 and Cys-195 are joined by a disulfide bond. Asp-192 is a catalytic residue. Residue His-205 is the Proton donor/acceptor of the active site.

Belongs to the cutinase family. In terms of processing, the 2 disulfide bonds play a critical role in holding the catalytic residues in juxta-position; reduction of the disulfide bridges results in the complete inactivation of the enzyme.

The protein resides in the secreted. It catalyses the reaction cutin + H2O = cutin monomers.. In terms of biological role, catalyzes the hydrolysis of complex carboxylic polyesters found in the cell wall of plants. Degrades cutin, a macromolecule that forms the structure of the plant cuticle. Allows pathogenic fungi to penetrate through the cuticular barrier into the host plant during the initial stage of fungal infection. The chain is Cutinase 2 (CUT2) from Fusarium vanettenii (Neocosmospora pisi).